Reading from the N-terminus, the 243-residue chain is MKTLVIAHRGDSKNVPENTIAAFKRAMELGADGIELDVQLTKDGHLVVIHDETVDRTTNGEGFVKDFTLEEIKKLDAGIKFGEKFAGERIPTLYEVFELIGDKDFLVNIEIKSGIVLYPGIEEKLIKAIKEYNFEERVIISSFNHYSLRDVKKMAPHLKIGLLYQCGLVEPWHMALRMEAYSLHPFYFNIIPELVEGCKKNGVKLFPWTVDRKEDMERMIKAGVDGIITDDPETLINLVRKGG.

The 237-residue stretch at 3 to 239 (TLVIAHRGDS…DDPETLINLV (237 aa)) folds into the GP-PDE domain. Residue His8 is the Proton acceptor of the active site. 2 residues coordinate Ca(2+): Glu35 and Asp37. His50 acts as the Proton donor in catalysis. Glu110 provides a ligand contact to Ca(2+).

This sequence belongs to the glycerophosphoryl diester phosphodiesterase family. Homodimer. It depends on Mg(2+) as a cofactor. Ca(2+) is required as a cofactor.

The catalysed reaction is a sn-glycero-3-phosphodiester + H2O = an alcohol + sn-glycerol 3-phosphate + H(+). It catalyses the reaction sn-glycerol 3-phosphocholine + H2O = sn-glycerol 3-phosphate + choline + H(+). Its activity is regulated as follows. Inhibited by EDTA. Glycerophosphodiester phosphodiesterase hydrolyzes glycerophosphodiesters into glycerol-3-phosphate (G3P) and the corresponding alcohol. Can use glycerophosphocholine. The chain is Glycerophosphodiester phosphodiesterase from Caldanaerobacter subterraneus subsp. tengcongensis (strain DSM 15242 / JCM 11007 / NBRC 100824 / MB4) (Thermoanaerobacter tengcongensis).